The primary structure comprises 167 residues: Multifunctional Ser/Thr-tRNA deacylase ProXp-y (167 aa).

It localises to the cytoplasm. It catalyses the reaction L-seryl-tRNA(Lys) + H2O = tRNA(Lys) + L-serine. It carries out the reaction L-threonyl-tRNA(Lys) + H2O = tRNA(Lys) + L-threonine. The enzyme catalyses L-homoseryl-tRNA(Lys) + H2O = tRNA(Lys) + L-homoserine + H(+). The catalysed reaction is L-seryl-tRNA(Ala) + H2O = tRNA(Ala) + L-serine. It catalyses the reaction L-homoseryl-tRNA(Ser) + H2O = tRNA(Ser) + L-homoserine + H(+). It carries out the reaction L-seryl-tRNA(Thr) + H2O = tRNA(Thr) + L-serine. The enzyme catalyses L-threonyl-tRNA(Ile) + H2O = tRNA(Ile) + L-threonine. The catalysed reaction is L-threonyl-tRNA(Val) + H2O = tRNA(Val) + L-threonine. It catalyses the reaction L-threonyl-tRNA(Ser) + H2O = tRNA(Ser) + L-threonine. An aminoacyl-tRNA editing enzyme that deacylates Ser-tRNA and/or Thr-tRNA mischarged by lysyl-tRNA synthetase (LysRS), threonyl-tRNA synthetase (ThrRS), seryl-tRNA synthetase (SerRS), alanyl-tRNA synthetase (AlaRS), valyl-tRNA synthetase (ValRS) and isoleucyl-tRNA synthetase (IleRS) in vitro. Also deacylates mischarged Hse-tRNA(Lys) and Hse-tRNA(Ser), and cognate Ser-tRNA(Ser) and Thr-tRNA(Thr) in vitro. The presence of cognate ThrRS abolishes the Thr-tRNA(Thr) deacylase activity, hence this activity is not applicable physiologically. Not able to remove the amino acid moiety from cognate Val-tRNA(Val), Ile-tRNA(Ile), Lys-tRNA(Lys), Ala-tRNA(Ala) or Pro-tRNA(Pro), or from incorrectly charged Ala-tRNA(Pro), Cys-tRNA(Pro) or Leu-tRNA(Pro) in vitro. May be required in vivo to prevent mistranslation and to maintain growth when the error prone stress-inducible lysyl-tRNA synthetase (LysU) is expressed under environmental pressure. This is Multifunctional Ser/Thr-tRNA deacylase ProXp-y from Escherichia coli O157:H7.